The chain runs to 262 residues: Protein CUSTOS (262 aa).

Disordered stretches follow at residues 1 to 79 and 126 to 262; these read MAAP…LQTT and FTSV…IPAN. Over residues 9 to 18 the composition is skewed to low complexity; it reads SDSESSNSSS. The segment covering 51–61 has biased composition (polar residues); it reads ANSQLSTSQPS. Ser61 is modified (phosphoserine). Thr79 carries the phosphothreonine modification. Ser138 is modified (phosphoserine). Thr182 is modified (phosphothreonine). Residues 188–199 show a composition bias toward basic residues; sequence KKKRKLKKKAKK. A compositionally biased stretch (low complexity) spans 200-209; it reads VASVDSAVAA. Positions 210-221 are enriched in polar residues; sequence TTPTSMATVQKQ. Residue Thr211 is modified to Phosphothreonine. The Nucleolar localization signal (NLS) signature appears at 236 to 241; that stretch reads KKKKKA.

Belongs to the CUSTOS family.

It localises to the nucleus envelope. Functionally, plays a role in the regulation of Wnt signaling pathway during early development. This is Protein CUSTOS from Homo sapiens (Human).